The primary structure comprises 877 residues: Potassium transporter 23 (877 aa).

Disordered regions lie at residues 1 to 60 and 72 to 92; these read MDDD…SLDG and ASAG…RASS. Over 1 to 126 the chain is Cytoplasmic; the sequence is MDDDDSGIQE…RGAHGHSSKE (126 aa). Residues 12–28 show a composition bias toward pro residues; the sequence is PAPPPPPPPPPPPPPPL. Over residues 76–86 the composition is skewed to gly residues; that stretch reads GASGGGGGGGP. The helical transmembrane segment at 127–147 threads the bilayer; the sequence is ISMLSTVAMAFQTLGVVYGDM. Topologically, residues 148–173 are extracellular; it reads GTSPLYVFSDVFSKVPIKSEVEILGA. The helical transmembrane segment at 174 to 194 threads the bilayer; it reads LSLVMYTIALIPFAKYVFIVL. Residues 195 to 260 lie on the Cytoplasmic side of the membrane; that stretch reads KANDNGEGGT…SLEKNPVFKN (66 aa). The helical transmembrane segment at 261-281 threads the bilayer; sequence ILLFLVLMGTSMVIGDGILTP. Topologically, residues 282–295 are extracellular; the sequence is SMSVMSAVSGLQGR. A helical transmembrane segment spans residues 296 to 316; sequence VPGFGTDAVVIVSILFLVLLF. At 317-325 the chain is on the cytoplasmic side; sequence SVQRFGTGK. Residues 326–346 form a helical membrane-spanning segment; that stretch reads VGFMFAPILALWFINLGTIGI. Residues 347-379 are Extracellular-facing; it reads YNLAKYDISVVRAFNPVYIYLFFQTNGIKAWSA. Residues 380 to 400 form a helical membrane-spanning segment; the sequence is LGGCVLCITGAEAMFADLGHF. The Cytoplasmic segment spans residues 401–406; sequence SVKSIQ. The helical transmembrane segment at 407 to 427 threads the bilayer; sequence VAFTAVVFPCLLIAYMGQAAY. Topologically, residues 428–441 are extracellular; that stretch reads LMKYPFAVERIFYD. A helical transmembrane segment spans residues 442 to 462; that stretch reads SVPEILFWPVFVIATLAAMIA. Topologically, residues 463–498 are cytoplasmic; the sequence is SQAMISATFSCIKQAMALGCFPRIKIIHTSKKVMGQ. A helical membrane pass occupies residues 499–519; the sequence is IYIPVMNWFLMVMCIIIVATF. Over 520–524 the chain is Extracellular; the sequence is RSTND. The helical transmembrane segment at 525-545 threads the bilayer; the sequence is IANAYGIAEVGVMMVSTALVT. Residues 546–555 are Cytoplasmic-facing; sequence LVMLLIWQTN. Residues 556–578 traverse the membrane as a helical segment; it reads LFLVMCFPVIFGSVEFVYLTAVL. Over 579–583 the chain is Extracellular; it reads SKIQE. Residues 584-604 traverse the membrane as a helical segment; the sequence is GGWLPLAFSSLFLCIMYTWNY. At 605–877 the chain is on the cytoplasmic side; the sequence is GSVLKYQSEM…IMRVGMTYMV (273 aa).

Belongs to the HAK/KUP transporter (TC 2.A.72.3) family.

It localises to the membrane. Its function is as follows. High-affinity potassium transporter. The chain is Potassium transporter 23 (HAK23) from Oryza sativa subsp. japonica (Rice).